Reading from the N-terminus, the 259-residue chain is uncharacterized protein (259 aa).

This is an uncharacterized protein from Methanocaldococcus jannaschii (strain ATCC 43067 / DSM 2661 / JAL-1 / JCM 10045 / NBRC 100440) (Methanococcus jannaschii).